Reading from the N-terminus, the 241-residue chain is Ribonuclease HII (241 aa).

In terms of domain architecture, RNase H type-2 spans 27–227 (GPVAGVDEAG…REARSLRLED (201 aa)). Positions 33, 34, and 128 each coordinate a divalent metal cation.

It belongs to the RNase HII family. Requires Mn(2+) as cofactor. Mg(2+) is required as a cofactor.

It is found in the cytoplasm. The enzyme catalyses Endonucleolytic cleavage to 5'-phosphomonoester.. Endonuclease that specifically degrades the RNA of RNA-DNA hybrids. The polypeptide is Ribonuclease HII (Frankia alni (strain DSM 45986 / CECT 9034 / ACN14a)).